The following is a 438-amino-acid chain: Putative F-box protein At5g15660 (438 aa).

The disordered stretch occupies residues 1 to 24 (MRRRSKKIKTENNSNPETSEERNK). Residues 22–68 (RNKFDEIPHDLVIEILERLPLKSVARFLTVSKLWATTIRSPDFRKSY) enclose the F-box domain.

In Arabidopsis thaliana (Mouse-ear cress), this protein is Putative F-box protein At5g15660.